A 59-amino-acid polypeptide reads, in one-letter code: Sperm protamine P1-type (59 aa).

The interval 1 to 59 (MARYRRNRSRSRSRRRRRRRGGRGGRRGRRRRRHGQRRRGRRGRERTRRRRRRRRRSSS) is disordered.

Belongs to the protamine P1 family. As to expression, testis.

Its subcellular location is the nucleus. It is found in the chromosome. Its function is as follows. Protamines substitute for histones in the chromatin of sperm during the haploid phase of spermatogenesis. They compact sperm DNA into a highly condensed, stable and inactive complex. In Chrysemys picta bellii (Western painted turtle), this protein is Sperm protamine P1-type.